A 299-amino-acid chain; its full sequence is Ribonuclease H2 subunit A (299 aa).

Methionine 1 bears the N-acetylmethionine mark. The RNase H type-2 domain maps to 28 to 250 (PCVLGVDEAG…AQTILEKEAE (223 aa)). Aspartate 34, glutamate 35, and aspartate 141 together coordinate a divalent metal cation. A phosphothreonine mark is found at threonine 204 and threonine 216. 2 positions are modified to phosphoserine: serine 257 and serine 277.

It belongs to the RNase HII family. Eukaryotic subfamily. In terms of assembly, the RNase H2 complex is a heterotrimer composed of the catalytic subunit RNASEH2A and the non-catalytic subunits RNASEH2B and RNASEH2C. It depends on Mn(2+) as a cofactor. Mg(2+) serves as cofactor.

It is found in the nucleus. The enzyme catalyses Endonucleolytic cleavage to 5'-phosphomonoester.. Catalytic subunit of RNase HII, an endonuclease that specifically degrades the RNA of RNA:DNA hybrids. Participates in DNA replication, possibly by mediating the removal of lagging-strand Okazaki fragment RNA primers during DNA replication. Mediates the excision of single ribonucleotides from DNA:RNA duplexes. The sequence is that of Ribonuclease H2 subunit A (RNASEH2A) from Homo sapiens (Human).